Consider the following 161-residue polypeptide: Phosphopantetheine adenylyltransferase (161 aa).

Position 10 (T10) interacts with substrate. ATP is bound by residues 10-11 (TF) and H18. 3 residues coordinate substrate: K42, M74, and R88. ATP contacts are provided by residues 89 to 91 (GLR), E99, and 124 to 130 (WSFISSS).

It belongs to the bacterial CoaD family. In terms of assembly, homohexamer. Requires Mg(2+) as cofactor.

The protein localises to the cytoplasm. It carries out the reaction (R)-4'-phosphopantetheine + ATP + H(+) = 3'-dephospho-CoA + diphosphate. It participates in cofactor biosynthesis; coenzyme A biosynthesis; CoA from (R)-pantothenate: step 4/5. Its function is as follows. Reversibly transfers an adenylyl group from ATP to 4'-phosphopantetheine, yielding dephospho-CoA (dPCoA) and pyrophosphate. The sequence is that of Phosphopantetheine adenylyltransferase from Edwardsiella ictaluri (strain 93-146).